The primary structure comprises 881 residues: Ent-kaurene synthase CPS/KS, chloroplastic (881 aa).

A chloroplast-targeting transit peptide spans 1–41; that stretch reads MASSTLIQNRSCGVTSSMSSFQIFRGQPLRFPGTRTPAAVQ. Mg(2+) contacts are provided by Asp417, Asp419, Asp635, Asp639, Asn778, Asp779, and Glu786. The DXDDTA motif signature appears at 417–422; sequence DVDDTA. The DDXXD motif signature appears at 635-639; sequence DDYFD.

It belongs to the terpene synthase family. It depends on Mg(2+) as a cofactor.

It localises to the plastid. It is found in the chloroplast. The catalysed reaction is (2E,6E,10E)-geranylgeranyl diphosphate = ent-copalyl diphosphate. It carries out the reaction ent-copalyl diphosphate = ent-kaur-16-ene + diphosphate. The enzyme catalyses ent-copalyl diphosphate = ent-beyerene + diphosphate. It catalyses the reaction ent-copalyl diphosphate = ent-sandaracopimara-8(14),15-diene + diphosphate. The catalysed reaction is ent-copalyl diphosphate = ent-isokaurene + diphosphate. It carries out the reaction ent-copalyl diphosphate + H2O = 16alpha-hydroxy-ent-kaurene + diphosphate. It participates in secondary metabolite biosynthesis; terpenoid biosynthesis. Its function is as follows. Bifunctional copalyl diphosphate/kaurene synthase involved in the biosynthesis of labdane-related diterpenoids (LRDs) natural products such as ent-beyerene, an antimicrobial compound. Supports the conversion of geranylgeranyl diphosphate (GGPP) to ent-copalyl diphosphate (ent-CDP). Also catalyzes the subsequent cyclization of ent-CDP into many diterpenes, including ent-kaur-16-ene as the major product, and ent-beyerene, ent-sandaracopimaradiene, ent-kaur-15-ene (ent-isokaurene) and 16-hydroxy-ent-kaurene (ent-16-alpha-hydroxy-kaurene) as minor products. This is Ent-kaurene synthase CPS/KS, chloroplastic from Physcomitrium patens (Spreading-leaved earth moss).